The primary structure comprises 442 residues: 23S rRNA (uracil(1939)-C(5))-methyltransferase RlmD (442 aa).

Residues 10–75 (AKQTAKNCCK…RQYGRAKANK (66 aa)) enclose the TRAM domain. [4Fe-4S] cluster-binding residues include C88, C94, C97, and C173. The S-adenosyl-L-methionine site is built by Q276, F305, N310, E326, N353, and D374. C400 acts as the Nucleophile in catalysis.

Belongs to the class I-like SAM-binding methyltransferase superfamily. RNA M5U methyltransferase family. RlmD subfamily.

It carries out the reaction uridine(1939) in 23S rRNA + S-adenosyl-L-methionine = 5-methyluridine(1939) in 23S rRNA + S-adenosyl-L-homocysteine + H(+). Functionally, catalyzes the formation of 5-methyl-uridine at position 1939 (m5U1939) in 23S rRNA. The sequence is that of 23S rRNA (uracil(1939)-C(5))-methyltransferase RlmD from Haemophilus ducreyi (strain 35000HP / ATCC 700724).